We begin with the raw amino-acid sequence, 401 residues long: S-adenosylmethionine synthase (401 aa).

Gly-136–Asp-141 contributes to the ATP binding site.

Belongs to the AdoMet synthase 2 family. Requires Mg(2+) as cofactor.

The enzyme catalyses L-methionine + ATP + H2O = S-adenosyl-L-methionine + phosphate + diphosphate. Its pathway is amino-acid biosynthesis; S-adenosyl-L-methionine biosynthesis; S-adenosyl-L-methionine from L-methionine: step 1/1. Functionally, catalyzes the formation of S-adenosylmethionine from methionine and ATP. In Pyrococcus furiosus (strain ATCC 43587 / DSM 3638 / JCM 8422 / Vc1), this protein is S-adenosylmethionine synthase.